The primary structure comprises 408 residues: Succinylornithine transaminase (408 aa).

Residue lysine 252 is modified to N6-(pyridoxal phosphate)lysine.

This sequence belongs to the class-III pyridoxal-phosphate-dependent aminotransferase family. AstC subfamily. The cofactor is pyridoxal 5'-phosphate.

The catalysed reaction is N(2)-succinyl-L-ornithine + 2-oxoglutarate = N-succinyl-L-glutamate 5-semialdehyde + L-glutamate. The protein operates within amino-acid degradation; L-arginine degradation via AST pathway; L-glutamate and succinate from L-arginine: step 3/5. In terms of biological role, catalyzes the transamination of N(2)-succinylornithine and alpha-ketoglutarate into N(2)-succinylglutamate semialdehyde and glutamate. Can also act as an acetylornithine aminotransferase. This Salmonella dublin (strain CT_02021853) protein is Succinylornithine transaminase.